A 200-amino-acid polypeptide reads, in one-letter code: Lipopolysaccharide core heptose(II)-phosphate phosphatase (200 aa).

The first 25 residues, 1-25, serve as a signal peptide directing secretion; the sequence is MLAFCRSSLKSKKYFIILLALAAIA.

It belongs to the phosphoglycerate mutase family. Ais subfamily.

It is found in the periplasm. It functions in the pathway bacterial outer membrane biogenesis; lipopolysaccharide metabolism. In terms of biological role, catalyzes the dephosphorylation of heptose(II) of the outer membrane lipopolysaccharide core. In Escherichia coli O6:H1 (strain CFT073 / ATCC 700928 / UPEC), this protein is Lipopolysaccharide core heptose(II)-phosphate phosphatase.